Reading from the N-terminus, the 372-residue chain is GRASP65 homolog protein 1 (372 aa).

Position 1 is an N-acetylmethionine (Met1). PDZ GRASP-type domains are found at residues 66 to 183 (SGLR…WTPL) and 188 to 276 (FTYH…YGFL). Positions 66-292 (SGLRIVWVDE…KHCPQQAQQQ (227 aa)) are GRASP. Position 155 is a phosphoserine (Ser155). The disordered stretch occupies residues 312 to 372 (VPSAFTAPPV…PPPQKQSSSD (61 aa)).

Homodimer. Interacts with BUG1 (via C-terminus), probably forming a heterooligomer consisting of a GRH1 dimer and a BUG1 dimer. Interacts with COPII coat components SEC23, SEC24, SFB2 and SFB3. N-terminal acetylation; by N-terminal acetyltransferase NatC.

The protein localises to the cytoplasm. Its subcellular location is the golgi apparatus. It is found in the cis-Golgi network membrane. Its function is as follows. Involved in the spindle assembly checkpoint. Involved in ER to Golgi vesicle-mediated transport by either facilitating USO1-dependent and -independent tethering or increasing target accuracy of fusion events of COPII-coated vesicles. The polypeptide is GRASP65 homolog protein 1 (GRH1) (Saccharomyces cerevisiae (strain ATCC 204508 / S288c) (Baker's yeast)).